The following is a 65-amino-acid chain: Small ribosomal subunit protein bS21 (65 aa).

Belongs to the bacterial ribosomal protein bS21 family.

The sequence is that of Small ribosomal subunit protein bS21 from Aster yellows phytoplasma.